Consider the following 39-residue polypeptide: Photosystem II reaction center protein Psb30 (39 aa).

A helical membrane pass occupies residues 12–32 (IFQLTFVGLIMVAGPVVIFLL).

This sequence belongs to the Psb30/Ycf12 family. In terms of assembly, PSII is composed of 1 copy each of membrane proteins PsbA, PsbB, PsbC, PsbD, PsbE, PsbF, PsbH, PsbI, PsbJ, PsbK, PsbL, PsbM, PsbT, PsbX, PsbY, PsbZ, Psb30/Ycf12, peripheral proteins PsbO, CyanoQ (PsbQ), PsbU, PsbV and a large number of cofactors. It forms dimeric complexes.

It is found in the cellular thylakoid membrane. A core subunit of photosystem II (PSII), probably helps stabilize the reaction center. This is Photosystem II reaction center protein Psb30 from Rippkaea orientalis (strain PCC 8801 / RF-1) (Cyanothece sp. (strain PCC 8801)).